A 173-amino-acid chain; its full sequence is bZIP transcription factor 44 (173 aa).

A disordered region spans residues 1–65 (MNNKTEMGSS…SRMRKQKHLD (65 aa)). Over residues 8–22 (GSSTSGNCSSVSTTG) the composition is skewed to low complexity. Residues 30-41 (SDLRQRDLIDER) are compositionally biased toward basic and acidic residues. A bZIP domain is found at 39-102 (DERKRKRKQS…VTIEAENDIL (64 aa)). The tract at residues 41–62 (RKRKRKQSNRESARRSRMRKQK) is basic motif. The segment at 67–81 (LTAQVTHLRKENAQI) is leucine-zipper.

As to quaternary structure, forms heterodimers with BZIP1, BZIP9, BZIP10, BZIP25 and BZIP63. In terms of tissue distribution, expressed in the micropylar endosperm and radicle tip in early germinating seeds.

The protein resides in the nucleus. Functionally, transcription factor that binds to the DNA G-box motif 5'-CACGTG-3' of MAN7 promoter. Involved in the positive regulation of seed germination through MAN7 gene activation. MAN7 is required for both, loosening of the micropylar endosperm, and rupture of the seed coat in germinating seeds. In Arabidopsis thaliana (Mouse-ear cress), this protein is bZIP transcription factor 44.